A 564-amino-acid polypeptide reads, in one-letter code: Tripeptidyl-peptidase 1 (564 aa).

A signal peptide spans 1–19; that stretch reads MGLQACLLGLFALILSGKC. A propeptide spans 20–195 (removed in mature form); it reads SYSPEPDQRR…PEPQVTGTVG (176 aa). The cysteines at positions 111 and 122 are disulfide-linked. In terms of domain architecture, Peptidase S53 spans 199 to 564; the sequence is GVTPSVIRKR…PALPKTLLNP (366 aa). Asn210 and Asn222 each carry an N-linked (GlcNAc...) asparagine glycan. Active-site charge relay system residues include Glu272 and Asp276. Asn286, Asn313, and Asn443 each carry an N-linked (GlcNAc...) asparagine glycan. Cystine bridges form between Cys365–Cys527 and Cys523–Cys538. The Charge relay system role is filled by Ser475. Asp518 and Val519 together coordinate Ca(2+). 3 residues coordinate Ca(2+): Gly540, Gly542, and Asp544.

In terms of assembly, monomer. Interacts with CLN5. Interacts with CLN3. Ca(2+) is required as a cofactor. In terms of processing, activated by autocatalytic proteolytical processing upon acidification. N-glycosylation is required for processing and activity.

The protein resides in the lysosome. Its subcellular location is the melanosome. It catalyses the reaction Release of an N-terminal tripeptide from a polypeptide, but also has endopeptidase activity.. Lysosomal serine protease with tripeptidyl-peptidase I activity. May act as a non-specific lysosomal peptidase which generates tripeptides from the breakdown products produced by lysosomal proteinases. Requires substrates with an unsubstituted N-terminus. This chain is Tripeptidyl-peptidase 1 (TPP1), found in Pongo abelii (Sumatran orangutan).